A 271-amino-acid chain; its full sequence is Phosphate import ATP-binding protein PstB (271 aa).

The ABC transporter domain occupies 24-266; the sequence is MIGQDVSVYY…PDDPRTQDYI (243 aa). 56 to 63 provides a ligand contact to ATP; that stretch reads GPSGCGKS.

Belongs to the ABC transporter superfamily. Phosphate importer (TC 3.A.1.7) family. In terms of assembly, the complex is composed of two ATP-binding proteins (PstB), two transmembrane proteins (PstC and PstA) and a solute-binding protein (PstS).

The protein resides in the cell inner membrane. It carries out the reaction phosphate(out) + ATP + H2O = ADP + 2 phosphate(in) + H(+). In terms of biological role, part of the ABC transporter complex PstSACB involved in phosphate import. Responsible for energy coupling to the transport system. This is Phosphate import ATP-binding protein PstB from Rhizobium etli (strain ATCC 51251 / DSM 11541 / JCM 21823 / NBRC 15573 / CFN 42).